The sequence spans 74 residues: MVDVLRFYLCLLCRFLHALTVTFLSDIFVWLVAKTRSIQAVIILHVASIERAYSNHQVNWSYIFQSAISKAIRG.

A helical transmembrane segment spans residues 15 to 32 (FLHALTVTFLSDIFVWLV).

The protein localises to the membrane. This is an uncharacterized protein from Saccharomyces cerevisiae (strain ATCC 204508 / S288c) (Baker's yeast).